Reading from the N-terminus, the 214-residue chain is MDFNQVKVINHPLIQHKLTIMRKKETSTVKFRTLMHEVSMLLAYEVTRDLEIEYEEIETPLATMQSPVLKGKKLVFVSILRAGNGLLDGMLQLVPTARIGHIGLYRDPKTLEAVEYYFKLPEHTQDRDVIVVDPMLATGNSAIAAVKEVKALHPKSIKFLCLLAAPEGISNFHGEHPDVPIFTAAIDEQLNDHGYIVPGLGDAGDRLYGTKLAH.

5-phospho-alpha-D-ribose 1-diphosphate-binding positions include Arg-81, Arg-106, and 133–141; that span reads DPMLATGNS. Residues Ile-196 and 201–203 each bind uracil; that span reads GDA. Residue Asp-202 coordinates 5-phospho-alpha-D-ribose 1-diphosphate.

This sequence belongs to the UPRTase family. The cofactor is Mg(2+).

The enzyme catalyses UMP + diphosphate = 5-phospho-alpha-D-ribose 1-diphosphate + uracil. Its pathway is pyrimidine metabolism; UMP biosynthesis via salvage pathway; UMP from uracil: step 1/1. With respect to regulation, allosterically activated by GTP. Its function is as follows. Catalyzes the conversion of uracil and 5-phospho-alpha-D-ribose 1-diphosphate (PRPP) to UMP and diphosphate. The polypeptide is Uracil phosphoribosyltransferase (Legionella pneumophila (strain Paris)).